We begin with the raw amino-acid sequence, 148 residues long: MGRFISVSFGLLVVFLSLSGTEAAFCCPSGWSAYDQNCYKVFTEEMNWADAEKFCTEQHKGSHLLSLHNIAEADFVLKKTLAMLKDGVIWMGLNDVWNECNWGWTDGAKLDYKAWNEGTNCFVFKIAKNHWSHMDCSSTHNFVCKFRV.

An N-terminal signal peptide occupies residues 1-23 (MGRFISVSFGLLVVFLSLSGTEA). 3 cysteine pairs are disulfide-bonded: C27-C38, C55-C144, and C121-C136. A C-type lectin domain is found at 34–145 (YDQNCYKVFT…CSSTHNFVCK (112 aa)).

It belongs to the snaclec family. In terms of assembly, heterodimer; disulfide-linked.

It localises to the secreted. In terms of biological role, interferes with one step of hemostasis (modulation of platelet aggregation, or coagulation cascade, for example). The chain is Snaclec 3 from Daboia siamensis (Eastern Russel's viper).